We begin with the raw amino-acid sequence, 258 residues long: MIQIDALPAFNDNYIWLLQDATSRRCAVVDPGDARPVEAWLAAHPDWRLSDILVTHHHHDHVGGVAALKELSGARVLGPANEKIPARDLALEDGERVEVLGLVFEIFHVPGHTLGHIAYYHAAQTPLLFCGDTLFAAGCGRLFEGTPAQMHRSLARLAALPANTRVYCTHEYTLSNLRFALAVEPENQALRERFEEATRLRERDRITLPSEISLELSTNPFLRVSENSVKKKADQRSGQQNRTPEEVFAVLRAWKDQF.

The Zn(2+) site is built by H56, H58, D60, H61, H112, D132, and H170.

This sequence belongs to the metallo-beta-lactamase superfamily. Glyoxalase II family. Monomer. Zn(2+) is required as a cofactor.

It carries out the reaction an S-(2-hydroxyacyl)glutathione + H2O = a 2-hydroxy carboxylate + glutathione + H(+). It participates in secondary metabolite metabolism; methylglyoxal degradation; (R)-lactate from methylglyoxal: step 2/2. Functionally, thiolesterase that catalyzes the hydrolysis of S-D-lactoyl-glutathione to form glutathione and D-lactic acid. The sequence is that of Hydroxyacylglutathione hydrolase from Pseudomonas paraeruginosa (strain DSM 24068 / PA7) (Pseudomonas aeruginosa (strain PA7)).